Reading from the N-terminus, the 412-residue chain is MPIKILMPALSPTMTEGNLARWLKKEGDKVNPGEVIAEIETDKATMEVEAVDEGILAKIVIPQNSQNVPVNSLIAVLSEEGEEKTDIDAFIAKNNSVSPSPKTDANLPKPHENIANVEEQVTVIKHDVSRIFASPLAKRLAKMRNIRFESVKGSGPHGRIVKQDILSYTPSTAHNKIVSRNPEEYRLVPNNNIRKIIAKRLLESKQTVPHFYLSIECNVDKLLDIREDINKFFSEDKSTRISVNDFIILAVAKALQEVPNANASWGEDAIRYYNNVDISVAVAIENGLVTPIVKNANQKNILELSREMKALIKKAKDNKLTPEEFQGGGFTISNLGMYGIKNFNAIINPPQSCIMGVGASAKRAIVKNDQITIATIMDVTLSADHRVVDGAVGAEFLVAFKKFIESPVLMLI.

The Lipoyl-binding domain maps to 2–78; that stretch reads PIKILMPALS…PVNSLIAVLS (77 aa). Lys43 is subject to N6-lipoyllysine. The Peripheral subunit-binding (PSBD) domain maps to 132–169; it reads FASPLAKRLAKMRNIRFESVKGSGPHGRIVKQDILSYT. Residue His385 is part of the active site.

It belongs to the 2-oxoacid dehydrogenase family. Forms a 24-polypeptide structural core with octahedral symmetry. The cofactor is (R)-lipoate.

It carries out the reaction N(6)-[(R)-dihydrolipoyl]-L-lysyl-[protein] + acetyl-CoA = N(6)-[(R)-S(8)-acetyldihydrolipoyl]-L-lysyl-[protein] + CoA. The pyruvate dehydrogenase complex catalyzes the overall conversion of pyruvate to acetyl-CoA and CO(2). It contains multiple copies of three enzymatic components: pyruvate dehydrogenase (E1), dihydrolipoamide acetyltransferase (E2) and lipoamide dehydrogenase (E3). In Rickettsia conorii (strain ATCC VR-613 / Malish 7), this protein is Dihydrolipoyllysine-residue acetyltransferase component of pyruvate dehydrogenase complex (pdhC).